Consider the following 195-residue polypeptide: Small ribosomal subunit protein uS4 (195 aa).

An S4 RNA-binding domain is found at 109 to 183; sequence RRLQTQVFKL…VKRKNLKKNQ (75 aa). Residues 165-195 are disordered; it reads PFGGGRPGRVKRKNLKKNQGGGGGAAEEEED.

It belongs to the universal ribosomal protein uS4 family. Component of the small ribosomal subunit. Identified in a IGF2BP1-dependent mRNP granule complex containing untranslated mRNAs. Part of the small subunit (SSU) processome, composed of more than 70 proteins and the RNA chaperone small nucleolar RNA (snoRNA) U3.

It localises to the cytoplasm. It is found in the nucleus. The protein resides in the nucleolus. Its function is as follows. Component of the small ribosomal subunit. The ribosome is a large ribonucleoprotein complex responsible for the synthesis of proteins in the cell. Part of the small subunit (SSU) processome, first precursor of the small eukaryotic ribosomal subunit. During the assembly of the SSU processome in the nucleolus, many ribosome biogenesis factors, an RNA chaperone and ribosomal proteins associate with the nascent pre-rRNA and work in concert to generate RNA folding, modifications, rearrangements and cleavage as well as targeted degradation of pre-ribosomal RNA by the RNA exosome. The polypeptide is Small ribosomal subunit protein uS4 (Drosophila melanogaster (Fruit fly)).